Reading from the N-terminus, the 796-residue chain is MDAENATWRKEFMWNNDEKRAEMGTKMFCDVSPHIMLNSHGVAEKMASGSKGMDFWEYPLPQLEIIILSIFLLWRLFDMLFKKLGVPIPKFTSMMLVGAVLSEMFGSMQIPCLKHIFIHYNQYMTKVPDTIGAFAFVLDWFLRGVTTDVGIMKKSGTKSVVIGITSMIIPWQIGKLLYSSREKSSILTMTEMEYTVMTFTMSMTPFTCVNMLLTDLKIVHTDFGQIAQSAGMVTDLLAFFLTVSAYVSRDETQGVKMGLAFMAFFIFVYLVRQFMLWVIRHTPEGAPVKNVYLYIGLLLAYLSYLYWSRFLFFGPLGAFALGLAVPNGPPLGSVFIQKFDSFNEGIFLPLFGSLSMIKLDWSFLRKEFGNGRHLHGHMYECFSFLPIVYIAKFATSFLAALATKIPLRDSIILGVIMGTKSSFELGYVLTAFEKDRISLEVLSLLGVYILVNSLLTPMAIHFLYDRSKRFVCYGRRNLKEKPEMQTLVCINKPDNITSMISLLRATSPSKDSPMECCVLHLIELLGQATPTFISHQLQKPKPGSRSYSENVISSFQLFQEVYWDSASINMFTSLTSAKEMHEQICWFALSQGSNLILLSFHRTWEPNGNVIISDDQTLRSLNLNVLKRAPCSVGIFVYRKPIWQTKALESPCRVCLIYVGGNDDKEALALADHMRGNQQVILTVLRLIPTSYADESSLRIHSQMVDMNRHEDQRPGDKSTIIDWTVGDGTETSKILHSVSYDYDLFIVGRRSGVGTTVTRGLGDWMEFEELGVIGDLLASEYFPSRASVLVVQQQE.

Transmembrane regions (helical) follow at residues Asp54–Trp74, Ser93–Leu113, Ile131–Ile151, Ser159–Ser179, Tyr194–Leu213, Phe223–Val243, Leu259–Ile279, Gly285–Leu305, Phe310–Pro330, Glu344–Leu364, Phe382–Ala402, Ile411–Ala431, and Leu444–Tyr464.

It belongs to the monovalent cation:proton antiporter 2 (CPA2) transporter (TC 2.A.37) family. CHX (TC 2.A.37.4) subfamily. As to expression, preferentially expressed in pollen.

The protein localises to the membrane. Its function is as follows. May operate as a cation/H(+) antiporter. This Arabidopsis thaliana (Mouse-ear cress) protein is Cation/H(+) antiporter 6B (CHX6b).